An 87-amino-acid chain; its full sequence is Retinal rod rhodopsin-sensitive cGMP 3',5'-cyclic phosphodiesterase subunit gamma (87 aa).

N-acetylmethionine is present on methionine 1. A compositionally biased stretch (basic and acidic residues) spans 1-12; the sequence is MNLEPPKGEIRS. The disordered stretch occupies residues 1–55; that stretch reads MNLEPPKGEIRSATRVIGGPVTPRKGPPKFKQRQTRQFKSKPPKKGVQGFGDDIP. Residues 26-44 show a composition bias toward basic residues; it reads GPPKFKQRQTRQFKSKPPK.

Belongs to the rod/cone cGMP-PDE gamma subunit family. In terms of assembly, oligomer composed of two catalytic chains (alpha and beta), an inhibitory chain (gamma) and the delta chain.

The enzyme catalyses 3',5'-cyclic GMP + H2O = GMP + H(+). Participates in processes of transmission and amplification of the visual signal. cGMP-PDEs are the effector molecules in G-protein-mediated phototransduction in vertebrate rods and cones. The protein is Retinal rod rhodopsin-sensitive cGMP 3',5'-cyclic phosphodiesterase subunit gamma (Pde6g) of Mus musculus (Mouse).